The primary structure comprises 181 residues: Ribosome-recycling factor (181 aa).

Positions 131–154 are disordered; sequence RRDAMDSVKKEKEMPEDDVRKAEN.

This sequence belongs to the RRF family.

It is found in the cytoplasm. Its function is as follows. Responsible for the release of ribosomes from messenger RNA at the termination of protein biosynthesis. May increase the efficiency of translation by recycling ribosomes from one round of translation to another. In Leuconostoc citreum (strain KM20), this protein is Ribosome-recycling factor.